A 747-amino-acid polypeptide reads, in one-letter code: MDFVDFDTLNLSDDLPQPQRALSLPIATNIETFGRKFYNLNSLTRNLLKRDNNTDTEKSENQPQVAEKYANLSLSLIEDTKNADNDHQEPHSDIKISALSARLSRVLNNPLSDSQIRQIFGSLEDTLRSWDSILEPGALGSMSRRKLRGEIERTLIRNQTQTLKEYQPVIKNLRKLEENVDALRSASMGVVDSVNNDFESSEIFNSKMENLHRKKTAVVVKKQLLSAFRAKFTLNEYEEYTLENGDISDEFFTVLAKAEQVDQNCSILLSIDNSQLGVKTMARVNRLVTRASEKVVAYANRTLGNLYALNNRDRVRTLHQCFVYLRHRPHYLNSVLATFVGSRSKTLVDEFLGQANSRVAGSSPQSEEYQDPVRVIGDLLAYIHSVVVSESETISGIFSFENDSVDETSRKEFGEIMNDCVAKVLQSLAKPVRAKLEQIISREVRISVLFSIHHLAELYYIMFSKQIKQDHMGLVATIESLVESAELRIVTTVENKLTTIRNSNSAQLQLNIDLQPPEWIIDFYSEILPMLDQTHTESIFKDNSLVNMVVDQPIQIYEQHMENSQVKNFEKRDKYILQLNCLDLILSKIMPISVLTDKVILVNEKIKEVSDKLVETQVSSLLEESGLTDFYNIVNMICPINDDFFDVSIYEPITENKLFTEDNIRQVNSKIQAFLPTALLDIQQSLFKINSPLVVNEIITESAIKYSRFYGRFQLICDEYLKVPLLAWSDGEVATLLGVEDAYFDEQ.

It belongs to the COG6 family.

It localises to the golgi apparatus membrane. Its function is as follows. Acts as a component of the peripheral membrane COG complex that is involved in intra-Golgi protein trafficking. COG is located at the cis-Golgi, and regulates tethering of retrograde intra-Golgi vesicles and possibly a number of other membrane trafficking events. This chain is Conserved oligomeric Golgi complex subunit 6 (COG6), found in Meyerozyma guilliermondii (strain ATCC 6260 / CBS 566 / DSM 6381 / JCM 1539 / NBRC 10279 / NRRL Y-324) (Yeast).